Consider the following 75-residue polypeptide: Protein B (75 aa).

The polypeptide is Protein B (Dicentrarchus labrax (European seabass)).